The chain runs to 213 residues: Na(+)-translocating NADH-quinone reductase subunit D (213 aa).

The next 7 membrane-spanning stretches (helical) occupy residues 14–34 (ALWINNQPLVAILGICSALAV), 42–62 (LTMGLAVSFVTGFASFVVSLL), 77–97 (IIISLFVILIDQFLKAFFFNI), 101–121 (LSVFVGLIITNCIVMGRAESM), 131–151 (FLDGLGSGLGYGWVLVCISII), 154–174 (LFGFGTILGFHIIPKIFYASA), and 183–203 (LGLMVLAPSAFFLLGIMVWLV).

Belongs to the NqrDE/RnfAE family. Composed of six subunits; NqrA, NqrB, NqrC, NqrD, NqrE and NqrF.

The protein resides in the cell inner membrane. It catalyses the reaction a ubiquinone + n Na(+)(in) + NADH + H(+) = a ubiquinol + n Na(+)(out) + NAD(+). Its function is as follows. NQR complex catalyzes the reduction of ubiquinone-1 to ubiquinol by two successive reactions, coupled with the transport of Na(+) ions from the cytoplasm to the periplasm. NqrA to NqrE are probably involved in the second step, the conversion of ubisemiquinone to ubiquinol. The chain is Na(+)-translocating NADH-quinone reductase subunit D from Chlamydia muridarum (strain MoPn / Nigg).